The following is a 60-amino-acid chain: Large ribosomal subunit protein uL30 (60 aa).

The protein belongs to the universal ribosomal protein uL30 family. As to quaternary structure, part of the 50S ribosomal subunit.

The sequence is that of Large ribosomal subunit protein uL30 from Agathobacter rectalis (strain ATCC 33656 / DSM 3377 / JCM 17463 / KCTC 5835 / VPI 0990) (Eubacterium rectale).